We begin with the raw amino-acid sequence, 277 residues long: 2,3,4,5-tetrahydropyridine-2,6-dicarboxylate N-succinyltransferase (277 aa).

The substrate site is built by Arg-106 and Asp-143.

This sequence belongs to the transferase hexapeptide repeat family. In terms of assembly, homotrimer.

The protein resides in the cytoplasm. It carries out the reaction (S)-2,3,4,5-tetrahydrodipicolinate + succinyl-CoA + H2O = (S)-2-succinylamino-6-oxoheptanedioate + CoA. Its pathway is amino-acid biosynthesis; L-lysine biosynthesis via DAP pathway; LL-2,6-diaminopimelate from (S)-tetrahydrodipicolinate (succinylase route): step 1/3. This Xylella fastidiosa (strain Temecula1 / ATCC 700964) protein is 2,3,4,5-tetrahydropyridine-2,6-dicarboxylate N-succinyltransferase.